The primary structure comprises 546 residues: MLLDTQLELAGGINNVTRILAPQGQVVLALKHPPHAPHLPDDVSLQSVLGEWQLSVQRTAEVSDQQLATIGKAISERQKLETLPYQTALDCPYRPLWHISPPQGLLNDPNGFIYHQGEYHLFYQWHPFVCEHKDKYWVHLKSLDLVHWQWQSVALTPSDWFDSHGVFSGHAVSHQQDLWLFYTGNTRLGVDRQRQTMQCAARMNANGEFEKLGPVIRCLPEGVTEHIRDPKVIYTQGKWHMLLGAQTLAHQGRLAVYHSDDLLHWHFDKLYGDELGNYGYMWECPDWFELQGEAFFVFGPQGIASANPHHTIEHQNRIFRATQNAQGEIALLQGWPLDEGFDFYAPQTAQTTDGRRVLCGWMGLPDETQHPSCDQGWIHQLTALRELEWREGKIYQHPLRELDTLRSEPHTLLLSDTVTELKAKSFDVQVTLPWGCQLRLMQNAQYCVTLTLDAENRLLRLDRSATQIRQGDTIRELKLDSPTVELRILADQSSLEIFINQGEHVMTSRIFTPLDATGISLHGASVDAKLYYMAPASAPFNLEVNV.

Substrate-binding positions include 105 to 108 (LLND), glutamine 124, 167 to 168 (FS), 228 to 229 (RD), and glutamate 283. Aspartate 108 is an active-site residue.

Belongs to the glycosyl hydrolase 32 family.

It is found in the cytoplasm. It carries out the reaction Hydrolysis of terminal non-reducing beta-D-fructofuranoside residues in beta-D-fructofuranosides.. It participates in glycan biosynthesis; sucrose metabolism. Enables the bacterium to metabolize sucrose as a sole carbon source. This chain is Probable sucrose-6-phosphate hydrolase, found in Vibrio cholerae.